The primary structure comprises 551 residues: Palmdelphin (551 aa).

Position 1 is an N-acetylmethionine (Met1). The stretch at Gln12 to Ile106 forms a coiled coil. Lys125 is covalently cross-linked (Glycyl lysine isopeptide (Lys-Gly) (interchain with G-Cter in SUMO2)). At Ser135 the chain carries Phosphoserine. Lys178 participates in a covalent cross-link: Glycyl lysine isopeptide (Lys-Gly) (interchain with G-Cter in SUMO1); alternate. Lys178 participates in a covalent cross-link: Glycyl lysine isopeptide (Lys-Gly) (interchain with G-Cter in SUMO2); alternate. Residues Glu247–Glu258 are compositionally biased toward basic and acidic residues. Residues Glu247–Cys266 form a disordered region. Thr270 bears the Phosphothreonine mark. Disordered regions lie at residues Leu294–Glu390 and Ala451–Asp533. Residues Ser321 and Ser349 each carry the phosphoserine modification. The segment covering His341–Glu353 has biased composition (polar residues). Residues Ser354–Pro365 show a composition bias toward basic and acidic residues. Phosphoserine occurs at positions 370, 375, 384, 385, 498, 515, and 520.

It belongs to the paralemmin family. In terms of assembly, interacts with GLUL. Post-translationally, phosphorylated. In terms of tissue distribution, ubiquitous. Expressed at highest levels in the heart and lung.

It is found in the cytoplasm. Its subcellular location is the cell projection. It localises to the dendrite. The protein resides in the dendritic spine. The sequence is that of Palmdelphin (Palmd) from Mus musculus (Mouse).